A 77-amino-acid chain; its full sequence is Conotoxin Vc6c (77 aa).

Residues 1 to 22 form the signal peptide; that stretch reads MKLTCMVIVAVLFLTANTFVTA. Positions 23–51 are excised as a propeptide; the sequence is DDSGNGLENLFSKAHHEIKNPEASNLNKR. 3 disulfide bridges follow: Cys52-Cys67, Cys59-Cys71, and Cys66-Cys76.

Expressed by the venom duct.

It localises to the secreted. The chain is Conotoxin Vc6c from Conus victoriae (Queen Victoria cone).